The following is a 981-amino-acid chain: DNA ligase 4 (981 aa).

Residues E320, K322, R327, E380, F424, E484, K489, K506, and K508 each contribute to the ATP site. Residue K322 is the N6-AMP-lysine intermediate of the active site. E380 contributes to the Mg(2+) binding site. E484 is a binding site for Mg(2+). A disordered region spans residues 544 to 563 (SEKNNPSSYESGSDSDSDSE). BRCT domains lie at 721-819 (SKAD…PKYV) and 875-980 (ERLL…EYAA).

Belongs to the ATP-dependent DNA ligase family. Mg(2+) serves as cofactor.

It localises to the nucleus. The enzyme catalyses ATP + (deoxyribonucleotide)n-3'-hydroxyl + 5'-phospho-(deoxyribonucleotide)m = (deoxyribonucleotide)n+m + AMP + diphosphate.. Functionally, DNA ligase involved in DNA non-homologous end joining (NHEJ); required for double-strand break (DSB) repair. This is DNA ligase 4 (LIG4) from Eremothecium gossypii (strain ATCC 10895 / CBS 109.51 / FGSC 9923 / NRRL Y-1056) (Yeast).